The chain runs to 196 residues: HTH-type transcriptional regulator EcpR (196 aa).

The HTH luxR-type domain maps to 138–196 (KDIKKDKITDREMEIIRMTAQGMLPKSIARIENCSVKTVYTHRRNAEAKLYSKLYKLVQ). Positions 162 to 181 (PKSIARIENCSVKTVYTHRR) form a DNA-binding region, H-T-H motif.

It belongs to the EcpR/MatA family.

It localises to the cytoplasm. Part of the ecpRABCDE operon, which encodes the E.coli common pilus (ECP). ECP is found in both commensal and pathogenic strains and plays a dual role in early-stage biofilm development and host cell recognition. Positively regulates the expression of the ecp operon by binding to two TTCCT boxes. The polypeptide is HTH-type transcriptional regulator EcpR (ecpR) (Escherichia coli O157:H7).